A 178-amino-acid polypeptide reads, in one-letter code: Ribosome rescue factor SmrB (178 aa).

One can recognise a Smr domain in the interval 99-174; it reads LDLHGLTQMQ…GNAALLILIE (76 aa).

The protein belongs to the SmrB family. Associates with collided ribosomes, but not with correctly translating polysomes.

Its function is as follows. Acts as a ribosome collision sensor. Detects stalled/collided disomes (pairs of ribosomes where the leading ribosome is stalled and a second ribosome has collided with it) and endonucleolytically cleaves mRNA at the 5' boundary of the stalled ribosome. Stalled/collided disomes form a new interface (primarily via the 30S subunits) that binds SmrB. Cleaved mRNA becomes available for tmRNA ligation, leading to ribosomal subunit dissociation and rescue of stalled ribosomes. In Photorhabdus laumondii subsp. laumondii (strain DSM 15139 / CIP 105565 / TT01) (Photorhabdus luminescens subsp. laumondii), this protein is Ribosome rescue factor SmrB.